The primary structure comprises 165 residues: Large ribosomal subunit protein uL10 (165 aa).

It belongs to the universal ribosomal protein uL10 family. In terms of assembly, part of the ribosomal stalk of the 50S ribosomal subunit. The N-terminus interacts with L11 and the large rRNA to form the base of the stalk. The C-terminus forms an elongated spine to which L12 dimers bind in a sequential fashion forming a multimeric L10(L12)X complex.

In terms of biological role, forms part of the ribosomal stalk, playing a central role in the interaction of the ribosome with GTP-bound translation factors. This is Large ribosomal subunit protein uL10 from Paraburkholderia phymatum (strain DSM 17167 / CIP 108236 / LMG 21445 / STM815) (Burkholderia phymatum).